A 202-amino-acid polypeptide reads, in one-letter code: Orotate phosphoribosyltransferase (202 aa).

113 to 121 contacts 5-phospho-alpha-D-ribose 1-diphosphate; sequence EDIITTGGS. Orotate contacts are provided by threonine 117 and arginine 145.

This sequence belongs to the purine/pyrimidine phosphoribosyltransferase family. PyrE subfamily. Homodimer. Mg(2+) serves as cofactor.

It carries out the reaction orotidine 5'-phosphate + diphosphate = orotate + 5-phospho-alpha-D-ribose 1-diphosphate. Its pathway is pyrimidine metabolism; UMP biosynthesis via de novo pathway; UMP from orotate: step 1/2. Catalyzes the transfer of a ribosyl phosphate group from 5-phosphoribose 1-diphosphate to orotate, leading to the formation of orotidine monophosphate (OMP). The polypeptide is Orotate phosphoribosyltransferase (Campylobacter lari (strain RM2100 / D67 / ATCC BAA-1060)).